Here is a 421-residue protein sequence, read N- to C-terminus: Testin (421 aa).

Residues 92 to 199 (MILTNPVAAK…GDVKLPREMD (108 aa)) enclose the PET domain. A disordered region spans residues 134–164 (KQPVAGSEGAQYRKKQLAKQLPAHDQDPSKC). The span at 155 to 164 (PAHDQDPSKC) shows a compositional bias: basic and acidic residues. LIM zinc-binding domains follow at residues 234–297 (YSCY…CDSE), 299–359 (PRCA…NHAV), and 362–421 (QGCH…KMMS).

It belongs to the prickle / espinas / testin family. As to quaternary structure, interacts via LIM domain 1 with ZYX. Interacts (via LIM domain 3) with ENAH and VASP. Interacts with ALKBH4, talin, actin, alpha-actinin, GRIP1 and PXN. Interacts (via LIM domain 2) with ACTL7A (via N-terminus). Heterodimer with ACTL7A; the heterodimer interacts with ENAH to form a heterotrimer.

The protein resides in the cytoplasm. It is found in the cell junction. It localises to the focal adhesion. Functionally, scaffold protein that may play a role in cell adhesion, cell spreading and in the reorganization of the actin cytoskeleton. Plays a role in the regulation of cell proliferation. May act as a tumor suppressor. This chain is Testin (TES), found in Rhinolophus ferrumequinum (Greater horseshoe bat).